Reading from the N-terminus, the 71-residue chain is Exodeoxyribonuclease 7 small subunit (71 aa).

This sequence belongs to the XseB family. Heterooligomer composed of large and small subunits.

The protein resides in the cytoplasm. The enzyme catalyses Exonucleolytic cleavage in either 5'- to 3'- or 3'- to 5'-direction to yield nucleoside 5'-phosphates.. In terms of biological role, bidirectionally degrades single-stranded DNA into large acid-insoluble oligonucleotides, which are then degraded further into small acid-soluble oligonucleotides. The polypeptide is Exodeoxyribonuclease 7 small subunit (Clostridium botulinum (strain Loch Maree / Type A3)).